The chain runs to 364 residues: 2-oxoglutarate-dependent dioxygenase imqE (364 aa).

The tract at residues 73–92 (KQKAAHPPGPNPQRGWSGIG) is disordered. The region spanning 199–315 (DGSELRLLHY…RWSAAYFFKA (117 aa)) is the Fe2OG dioxygenase domain. Histidine 227, aspartate 229, and histidine 287 together coordinate Fe cation. Arginine 306 serves as a coordination point for 2-oxoglutarate.

This sequence belongs to the iron/ascorbate-dependent oxidoreductase family. Requires Fe(2+) as cofactor.

It functions in the pathway secondary metabolite biosynthesis. Its function is as follows. 2-oxoglutarate-dependent dioxygenase; part of the gene cluster that mediates the biosynthesis of imizoquins A to D, tripeptide-derived alkaloids that serve a protective role against oxidative stress that are essential for normal germination. ImqB is a canonical three-module NRPS that assembles the tripeptide backbone of the imizoquins via condensation of Trp, Tyr, and Leu-derived precursors. N-methylation by imqF and phenol oxidation by imqC, followed by cyclization via the FAD-dependent oxidase imqH carry out the three-step transformation of L-tyrosine into tetrahydroisoquinoline. Importantly, this sequence requires the presence of a free amine in the tyrosine moiety, indicating that isoquinoline formation occurs prior to peptide bond formation. The imidazolidin-4-one ring of imizoquins could form following additional oxidation of the methyl-derived bridgehead carbon by imqH. Lastly, O-methylation by imqG and leucine hydroxylation by imqE complete biosynthesis of the imizoquins. The chain is 2-oxoglutarate-dependent dioxygenase imqE from Aspergillus flavus (strain ATCC 200026 / FGSC A1120 / IAM 13836 / NRRL 3357 / JCM 12722 / SRRC 167).